A 480-amino-acid chain; its full sequence is Carboxy-terminal processing protease CtpB (480 aa).

Positions M1 to A23 are cleaved as a signal peptide. Residues S92–P182 form the PDZ domain. A peptide binding region spans residues G113–A116. Residue S309 is the Nucleophile of the active site. Active-site charge relay system residues include K334 and Q338.

This sequence belongs to the peptidase S41A family. Homodimer. In terms of processing, is cleaved by SpoIVB in vitro and in vivo but this cleavage does not appear to be necessary for CtpB activation. CtpB can also cleave itself in vivo.

It localises to the forespore intermembrane space. It carries out the reaction The enzyme shows specific recognition of a C-terminal tripeptide, Xaa-Yaa-Zaa, in which Xaa is preferably Ala or Leu, Yaa is preferably Ala or Tyr, and Zaa is preferably Ala, but then cleaves at a variable distance from the C-terminus. A typical cleavage is -Ala-Ala-|-Arg-Ala-Ala-Lys-Glu-Asn-Tyr-Ala-Leu-Ala-Ala.. Activated by peptide binding to the PDZ domain. Functionally, involved in the signal transduction pathway leading to the proteolytic activation of the mother cell transcription factor pro-sigma-K during sporulation. The signaling serine protease CtpB triggers pro-sigma-K processing by cleaving the pre-processed regulatory protein SpoIVFA and is necessary for the proper timing of sigma-K activation. This is Carboxy-terminal processing protease CtpB (ctpB) from Bacillus subtilis (strain 168).